Here is a 202-residue protein sequence, read N- to C-terminus: Holliday junction resolvase RecU (202 aa).

Residues Thr85, Asp87, Glu100, and Gln119 each contribute to the Mg(2+) site.

The protein belongs to the RecU family. The cofactor is Mg(2+).

It localises to the cytoplasm. It carries out the reaction Endonucleolytic cleavage at a junction such as a reciprocal single-stranded crossover between two homologous DNA duplexes (Holliday junction).. Functionally, endonuclease that resolves Holliday junction intermediates in genetic recombination. Cleaves mobile four-strand junctions by introducing symmetrical nicks in paired strands. Promotes annealing of linear ssDNA with homologous dsDNA. Required for DNA repair, homologous recombination and chromosome segregation. The chain is Holliday junction resolvase RecU from Streptococcus pyogenes serotype M6 (strain ATCC BAA-946 / MGAS10394).